A 154-amino-acid chain; its full sequence is 6,7-dimethyl-8-ribityllumazine synthase (154 aa).

5-amino-6-(D-ribitylamino)uracil is bound by residues F22, 57–59, and 81–83; these read AYE and AVI. Residue 86–87 participates in (2S)-2-hydroxy-3-oxobutyl phosphate binding; sequence GT. Residue H89 is the Proton donor of the active site. F114 contributes to the 5-amino-6-(D-ribitylamino)uracil binding site. Residue R128 coordinates (2S)-2-hydroxy-3-oxobutyl phosphate.

This sequence belongs to the DMRL synthase family. Forms an icosahedral capsid composed of 60 subunits, arranged as a dodecamer of pentamers.

The enzyme catalyses (2S)-2-hydroxy-3-oxobutyl phosphate + 5-amino-6-(D-ribitylamino)uracil = 6,7-dimethyl-8-(1-D-ribityl)lumazine + phosphate + 2 H2O + H(+). It functions in the pathway cofactor biosynthesis; riboflavin biosynthesis; riboflavin from 2-hydroxy-3-oxobutyl phosphate and 5-amino-6-(D-ribitylamino)uracil: step 1/2. In terms of biological role, catalyzes the formation of 6,7-dimethyl-8-ribityllumazine by condensation of 5-amino-6-(D-ribitylamino)uracil with 3,4-dihydroxy-2-butanone 4-phosphate. This is the penultimate step in the biosynthesis of riboflavin. The polypeptide is 6,7-dimethyl-8-ribityllumazine synthase (Colwellia psychrerythraea (strain 34H / ATCC BAA-681) (Vibrio psychroerythus)).